A 183-amino-acid chain; its full sequence is Peptide deformylase (183 aa).

Residues Cys90 and His132 each coordinate Fe cation. Residue Glu133 is part of the active site. A Fe cation-binding site is contributed by His136.

This sequence belongs to the polypeptide deformylase family. It depends on Fe(2+) as a cofactor.

The catalysed reaction is N-terminal N-formyl-L-methionyl-[peptide] + H2O = N-terminal L-methionyl-[peptide] + formate. Functionally, removes the formyl group from the N-terminal Met of newly synthesized proteins. Requires at least a dipeptide for an efficient rate of reaction. N-terminal L-methionine is a prerequisite for activity but the enzyme has broad specificity at other positions. The chain is Peptide deformylase from Parafrankia sp. (strain EAN1pec).